We begin with the raw amino-acid sequence, 212 residues long: Thylakoid membrane protein slr1949 (212 aa).

Residues 109 to 131 (WVQDGLLLLLALGLCGISGYRLW) form a helical membrane-spanning segment. A coiled-coil region spans residues 180 to 212 (PNRRQRKQYETRLQALRQSAAKMKAKTQKAKAL).

It localises to the cellular thylakoid membrane. The protein is Thylakoid membrane protein slr1949 of Synechocystis sp. (strain ATCC 27184 / PCC 6803 / Kazusa).